The sequence spans 554 residues: Chaperonin GroEL (554 aa).

ATP-binding positions include 29-32 (TLGP), Lys50, 86-90 (DGTTT), Gly414, and Asp495.

This sequence belongs to the chaperonin (HSP60) family. Forms a cylinder of 14 subunits composed of two heptameric rings stacked back-to-back. Interacts with the co-chaperonin GroES.

The protein localises to the cytoplasm. It carries out the reaction ATP + H2O + a folded polypeptide = ADP + phosphate + an unfolded polypeptide.. In terms of biological role, together with its co-chaperonin GroES, plays an essential role in assisting protein folding. The GroEL-GroES system forms a nano-cage that allows encapsulation of the non-native substrate proteins and provides a physical environment optimized to promote and accelerate protein folding. The chain is Chaperonin GroEL from Pelagibacter ubique (strain HTCC1062).